A 478-amino-acid polypeptide reads, in one-letter code: Noelin-3 (478 aa).

The first 23 residues, 1–23 (MSPPLLKLGAVLSTMAMISNWMS), serve as a signal peptide directing secretion. N-linked (GlcNAc...) asparagine glycosylation is found at asparagine 33, asparagine 95, asparagine 179, asparagine 299, and asparagine 465. A coiled-coil region spans residues 77 to 217 (CSRDAKSRQL…TRLRDCMKKL (141 aa)). Positions 218–470 (TCGKLMKITG…QVLFNVTLFH (253 aa)) constitute an Olfactomedin-like domain. The cysteines at positions 219 and 401 are disulfide-linked.

In terms of assembly, peripherally associated with AMPAR complex. AMPAR complex consists of an inner core made of 4 pore-forming GluA/GRIA proteins (GRIA1, GRIA2, GRIA3 and GRIA4) and 4 major auxiliary subunits arranged in a twofold symmetry. One of the two pairs of distinct binding sites is occupied either by CNIH2, CNIH3 or CACNG2, CACNG3. The other harbors CACNG2, CACNG3, CACNG4, CACNG8 or GSG1L. This inner core of AMPAR complex is complemented by outer core constituents binding directly to the GluA/GRIA proteins at sites distinct from the interaction sites of the inner core constituents. Outer core constituents include at least PRRT1, PRRT2, CKAMP44/SHISA9, FRRS1L and NRN1. The proteins of the inner and outer core serve as a platform for other, more peripherally associated AMPAR constituents, including OLFM3. Alone or in combination, these auxiliary subunits control the gating and pharmacology of the AMPAR complex and profoundly impact their biogenesis and protein processing. Homodimer. Interacts with MYOC. Interacts with OLFM2. In the eye, expressed in trabecular meshwork and neural retina; in non-ocular tissues, expressed in brain and lung.

Its subcellular location is the secreted. It localises to the synapse. The sequence is that of Noelin-3 (OLFM3) from Homo sapiens (Human).